A 409-amino-acid chain; its full sequence is DNA primase small subunit (409 aa).

Active-site residues include glutamate 46, aspartate 111, and aspartate 113. A Zinc knuckle motif motif is present at residues 123–133; the sequence is CCSGAQVCSKC.

This sequence belongs to the eukaryotic-type primase small subunit family. As to quaternary structure, DNA polymerase alpha:primase is a four subunit enzyme complex, which is assembled throughout the cell cycle, and consists of the two DNA polymerase subunits A POL1 and B POL12, and the DNA primase large PRI2 and small PRI1 subunits.

DNA primase is the polymerase that synthesizes small RNA primers for the Okazaki fragments made during discontinuous DNA replication. In a complex with DNA polymerase alpha (DNA polymerase alpha:primase) constitutes a replicative polymerase. Both primase components participate in formation of the active center, but the ATP-binding site is exclusively located on p48. The protein is DNA primase small subunit (PRI1) of Saccharomyces cerevisiae (strain ATCC 204508 / S288c) (Baker's yeast).